The primary structure comprises 308 residues: Pantothenate kinase (308 aa).

93 to 100 (GSVAVGKS) is a binding site for ATP.

It belongs to the prokaryotic pantothenate kinase family.

The protein localises to the cytoplasm. It carries out the reaction (R)-pantothenate + ATP = (R)-4'-phosphopantothenate + ADP + H(+). It participates in cofactor biosynthesis; coenzyme A biosynthesis; CoA from (R)-pantothenate: step 1/5. The protein is Pantothenate kinase of Corynebacterium diphtheriae (strain ATCC 700971 / NCTC 13129 / Biotype gravis).